The primary structure comprises 367 residues: Chorismate synthase (367 aa).

Arginine 48 provides a ligand contact to NADP(+). Residues arginine 125–serine 127, asparagine 241–alanine 242, glycine 285, lysine 300–serine 304, and arginine 326 each bind FMN.

It belongs to the chorismate synthase family. Homotetramer. It depends on FMNH2 as a cofactor.

The catalysed reaction is 5-O-(1-carboxyvinyl)-3-phosphoshikimate = chorismate + phosphate. The protein operates within metabolic intermediate biosynthesis; chorismate biosynthesis; chorismate from D-erythrose 4-phosphate and phosphoenolpyruvate: step 7/7. In terms of biological role, catalyzes the anti-1,4-elimination of the C-3 phosphate and the C-6 proR hydrogen from 5-enolpyruvylshikimate-3-phosphate (EPSP) to yield chorismate, which is the branch point compound that serves as the starting substrate for the three terminal pathways of aromatic amino acid biosynthesis. This reaction introduces a second double bond into the aromatic ring system. The polypeptide is Chorismate synthase (Dinoroseobacter shibae (strain DSM 16493 / NCIMB 14021 / DFL 12)).